The primary structure comprises 196 residues: UMP-CMP kinase (196 aa).

ATP is bound at residue 13–18; that stretch reads GAGKGT. At serine 33 the chain carries Phosphoserine. An NMP region spans residues 33-63; that stretch reads SAGELLRDERKNPDSQYGELIEKYIKEGKIV. Arginine 39 is an a ribonucleoside 5'-phosphate binding site. Residues lysine 43 and lysine 55 each carry the N6-acetyllysine modification. 61–63 contributes to the a ribonucleoside 5'-phosphate binding site; sequence KIV. Lysine 73 participates in a covalent cross-link: Glycyl lysine isopeptide (Lys-Gly) (interchain with G-Cter in SUMO2). 93-96 is an a ribonucleoside 5'-phosphate binding site; the sequence is GFPR. Residue asparagine 100 coordinates CMP. Residue lysine 106 is modified to N6-succinyllysine. Positions 133–143 are LID; sequence ERGKSSGRSDD. Position 134 (arginine 134) interacts with ATP. A ribonucleoside 5'-phosphate contacts are provided by arginine 140 and arginine 151. Lysine 179 is a binding site for ATP. Residue serine 180 is modified to Phosphoserine.

The protein belongs to the adenylate kinase family. UMP-CMP kinase subfamily. In terms of assembly, monomer. Mg(2+) is required as a cofactor. In terms of tissue distribution, ubiquitously expressed.

Its subcellular location is the nucleus. It is found in the cytoplasm. It catalyses the reaction CMP + ATP = CDP + ADP. It carries out the reaction dCMP + ATP = dCDP + ADP. The catalysed reaction is UMP + ATP = UDP + ADP. The enzyme catalyses a 2'-deoxyribonucleoside 5'-diphosphate + ATP = a 2'-deoxyribonucleoside 5'-triphosphate + ADP. It catalyses the reaction a ribonucleoside 5'-diphosphate + ATP = a ribonucleoside 5'-triphosphate + ADP. Catalyzes the phosphorylation of pyrimidine nucleoside monophosphates at the expense of ATP. Plays an important role in de novo pyrimidine nucleotide biosynthesis. Has preference for UMP and CMP as phosphate acceptors. Also displays broad nucleoside diphosphate kinase activity. The protein is UMP-CMP kinase of Homo sapiens (Human).